The primary structure comprises 440 residues: ATP-dependent protease ATPase subunit HslU (440 aa).

ATP contacts are provided by residues isoleucine 18 and glycine 60–glutamate 65. The interval arginine 138 to leucine 159 is disordered. Positions 252, 318, and 390 each coordinate ATP.

Belongs to the ClpX chaperone family. HslU subfamily. In terms of assembly, a double ring-shaped homohexamer of HslV is capped on each side by a ring-shaped HslU homohexamer. The assembly of the HslU/HslV complex is dependent on binding of ATP.

The protein resides in the cytoplasm. Its function is as follows. ATPase subunit of a proteasome-like degradation complex; this subunit has chaperone activity. The binding of ATP and its subsequent hydrolysis by HslU are essential for unfolding of protein substrates subsequently hydrolyzed by HslV. HslU recognizes the N-terminal part of its protein substrates and unfolds these before they are guided to HslV for hydrolysis. The chain is ATP-dependent protease ATPase subunit HslU from Alkalilimnicola ehrlichii (strain ATCC BAA-1101 / DSM 17681 / MLHE-1).